The following is a 52-amino-acid chain: Troponin C, skeletal muscle (52 aa).

EF-hand domains are found at residues 2 to 37 and 38 to 52; these read KSEE…SGEH and VTDE…DGDK. The Ca(2+) site is built by Asp15, Asn17, Asp19, Tyr21, and Glu26.

The protein belongs to the troponin C family.

Functionally, troponin is the central regulatory protein of striated muscle contraction. Tn consists of three components: Tn-I which is the inhibitor of actomyosin ATPase, Tn-T which contains the binding site for tropomyosin and Tn-C. The binding of calcium to Tn-C abolishes the inhibitory action of Tn on actin filaments. The chain is Troponin C, skeletal muscle from Protopterus dolloi (Slender lungfish).